The sequence spans 475 residues: FAD-dependent monooxygenase penE (475 aa).

FAD contacts are provided by Glu35, Gly49, and Arg108. Residue Tyr216 is part of the active site. The FAD site is built by Asp308 and Ala321. Asn437 carries an N-linked (GlcNAc...) asparagine glycan. The chain crosses the membrane as a helical span at residues 446 to 466 (WGSIWLSPVILCLFCMLFLWP).

This sequence belongs to the paxM FAD-dependent monooxygenase family. It depends on FAD as a cofactor.

It localises to the membrane. It catalyses the reaction [(1'E)-3'-hydroxy-3',7'-dimethylocta-1',6'-dien-1'-yl]-quinolinone B + NADPH + O2 + H(+) = [(1'E)-5'-(3',3'-dimethyloxiran-2'-yl)-3'-hydroxy-3'-methylpent-1'-en-1'-yl]-quinolinone B + NADP(+) + H2O. It participates in secondary metabolite biosynthesis. It functions in the pathway alkaloid biosynthesis. The protein operates within mycotoxin biosynthesis. In terms of biological role, FAD-dependent monooxygenase; part of the gene cluster that mediates the biosynthesis of penigequinolones, potent insecticidal alkaloids that contain a highly modified 10-carbon prenyl group. The first stage is catalyzed by the nonribosomal peptide synthetase penN that condenses anthranilic acid and O-methyl-L-tyrosine to produce 4'-methoxycyclopeptin. 4'-methoxycyclopeptin is then converted to 4'-methoxydehydrocyclopeptin by the ketoglutarate-dependent dioxygenase penM through dehydrogenation to form a double bond between C-alpha and C-beta of the O-methyltyrosine side chain. PenM also converts its first product methoxydehydrocyclopeptin to 4'-methoxycyclopenin. The following conversion of 4'methoxycyclopenin into 4'-methoxyviridicatin is catalyzed by the cyclopenase penL. 4'-methoxyviridicatin is the precursor of quinolone natural products, and is further converted to quinolinone B. The prenyltransferase penI then catalyzes the canonical Friedel-Crafts alkylation of quinolinone B with dimethylallyl cation to yield dimethylallyl quinolone, which is subjected to FAD-dependent dehydrogenation by the FAD-linked oxidoreductase penH to yield conjugated aryl diene. The delta(3') double bond then serves as the site of the second alkylation with DMAPP catalyzed by the prenyltransferase penG to yield a carbenium ion intermediate, which can be attacked by H(2)O to yield a styrenyl quinolone containing a C3'-hydroxyprenyl chain, or undergo cyclization to yield yaequinolones J1 and J2. The conversion of the styrenyl quinolone into the tetrahydrofuran-containing yaequinolone C is performed by the FAD-dependent monooxygenase penE and involves epoxidation of the terminal C7'-C8' olefin, followed by epoxide ring opening initiated by the C3' hydroxyl group. The predicted cysteine hydrolase penJ acts as an epoxide hydrolase that enhances the rate of the 5-exo-tet cyclization step, increasing the yield of yaequinolone C. PenF catalyzes the cationic rearrangement of the epoxide formed by penE (before ring opening to produce yaequinolone C) into yaequinolone D. Finally, the short-chain dehydrogenase/reductase (SDR)-like reductase penD, catalyzes both the dehydration of yaequinolone D and the reduction of the resulting oxonium to yield penigequinolone. The polypeptide is FAD-dependent monooxygenase penE (Penicillium thymicola).